Consider the following 219-residue polypeptide: tRNA (guanine-N(7)-)-methyltransferase (219 aa).

Residues E43, D68, E101, and N124 each coordinate S-adenosyl-L-methionine. 2 residues coordinate substrate: K128 and D160.

This sequence belongs to the class I-like SAM-binding methyltransferase superfamily. TrmB family.

It carries out the reaction guanosine(46) in tRNA + S-adenosyl-L-methionine = N(7)-methylguanosine(46) in tRNA + S-adenosyl-L-homocysteine. It functions in the pathway tRNA modification; N(7)-methylguanine-tRNA biosynthesis. Functionally, catalyzes the formation of N(7)-methylguanine at position 46 (m7G46) in tRNA. In Clostridium botulinum (strain Eklund 17B / Type B), this protein is tRNA (guanine-N(7)-)-methyltransferase.